We begin with the raw amino-acid sequence, 345 residues long: Protein RecA (345 aa).

An ATP-binding site is contributed by 81–88; it reads GPESSGKT.

This sequence belongs to the RecA family.

It is found in the cytoplasm. In terms of biological role, can catalyze the hydrolysis of ATP in the presence of single-stranded DNA, the ATP-dependent uptake of single-stranded DNA by duplex DNA, and the ATP-dependent hybridization of homologous single-stranded DNAs. It interacts with LexA causing its activation and leading to its autocatalytic cleavage. In Mycoplasma mycoides, this protein is Protein RecA.